Here is a 128-residue protein sequence, read N- to C-terminus: Ribosome-binding factor A (128 aa).

Belongs to the RbfA family. As to quaternary structure, monomer. Binds 30S ribosomal subunits, but not 50S ribosomal subunits or 70S ribosomes.

It is found in the cytoplasm. Its function is as follows. One of several proteins that assist in the late maturation steps of the functional core of the 30S ribosomal subunit. Associates with free 30S ribosomal subunits (but not with 30S subunits that are part of 70S ribosomes or polysomes). Required for efficient processing of 16S rRNA. May interact with the 5'-terminal helix region of 16S rRNA. The polypeptide is Ribosome-binding factor A (Haemophilus influenzae (strain 86-028NP)).